The primary structure comprises 574 residues: Aspartate--tRNA ligase (574 aa).

Residue E169 participates in L-aspartate binding. Residues 193 to 196 (QLFK) form an aspartate region. Position 215 (R215) interacts with L-aspartate. Residues 215–217 (RDE) and Q224 contribute to the ATP site. H437 is a binding site for L-aspartate. E471 lines the ATP pocket. Residue R478 participates in L-aspartate binding. Position 523 to 526 (523 to 526 (GLDR)) interacts with ATP.

It belongs to the class-II aminoacyl-tRNA synthetase family. Type 1 subfamily. Homodimer.

The protein localises to the cytoplasm. It carries out the reaction tRNA(Asp) + L-aspartate + ATP = L-aspartyl-tRNA(Asp) + AMP + diphosphate. Its function is as follows. Catalyzes the attachment of L-aspartate to tRNA(Asp) in a two-step reaction: L-aspartate is first activated by ATP to form Asp-AMP and then transferred to the acceptor end of tRNA(Asp). This chain is Aspartate--tRNA ligase, found in Mycoplasma mycoides subsp. mycoides SC (strain CCUG 32753 / NCTC 10114 / PG1).